Consider the following 294-residue polypeptide: Protoheme IX farnesyltransferase 1 (294 aa).

9 consecutive transmembrane segments (helical) span residues Val-8–Ala-28, Pro-35–Ile-55, Ala-82–Ala-102, Ala-107–Met-127, Val-132–Ala-152, Leu-162–Phe-182, Ile-208–Thr-228, Gly-229–Arg-249, and Gln-263–Tyr-283.

This sequence belongs to the UbiA prenyltransferase family. Protoheme IX farnesyltransferase subfamily.

The protein localises to the cell inner membrane. The catalysed reaction is heme b + (2E,6E)-farnesyl diphosphate + H2O = Fe(II)-heme o + diphosphate. It functions in the pathway porphyrin-containing compound metabolism; heme O biosynthesis; heme O from protoheme: step 1/1. In terms of biological role, converts heme B (protoheme IX) to heme O by substitution of the vinyl group on carbon 2 of heme B porphyrin ring with a hydroxyethyl farnesyl side group. The polypeptide is Protoheme IX farnesyltransferase 1 (Pseudoalteromonas translucida (strain TAC 125)).